We begin with the raw amino-acid sequence, 457 residues long: tRNA modification GTPase MnmE (457 aa).

Residues Arg25, Glu87, and Arg126 each coordinate (6S)-5-formyl-5,6,7,8-tetrahydrofolate. Residues 223 to 377 enclose the TrmE-type G domain; that stretch reads GIATAIIGRP…IEEKINQLFF (155 aa). Asn233 contacts K(+). Residues 233–238, 252–258, and 277–280 each bind GTP; these read NVGKSS, TDIAGTT, and DTAG. Position 237 (Ser237) interacts with Mg(2+). Positions 252, 254, and 257 each coordinate K(+). Thr258 is a binding site for Mg(2+). Lys457 provides a ligand contact to (6S)-5-formyl-5,6,7,8-tetrahydrofolate.

Belongs to the TRAFAC class TrmE-Era-EngA-EngB-Septin-like GTPase superfamily. TrmE GTPase family. In terms of assembly, homodimer. Heterotetramer of two MnmE and two MnmG subunits. It depends on K(+) as a cofactor.

The protein localises to the cytoplasm. In terms of biological role, exhibits a very high intrinsic GTPase hydrolysis rate. Involved in the addition of a carboxymethylaminomethyl (cmnm) group at the wobble position (U34) of certain tRNAs, forming tRNA-cmnm(5)s(2)U34. This chain is tRNA modification GTPase MnmE, found in Streptococcus suis (strain 98HAH33).